Consider the following 361-residue polypeptide: S-adenosylmethionine decarboxylase proenzyme (361 aa).

Residues glutamate 13 and glutamate 16 contribute to the active site. Residue serine 73 is the Schiff-base intermediate with substrate; via pyruvic acid of the active site. Residue serine 73 is modified to Pyruvic acid (Ser); by autocatalysis. The active-site Proton donor; for catalytic activity is the cysteine 87. Active-site proton acceptor; for processing activity residues include serine 236 and histidine 249.

It belongs to the eukaryotic AdoMetDC family. Pyruvate serves as cofactor. Is synthesized initially as an inactive proenzyme. Formation of the active enzyme involves a self-maturation process in which the active site pyruvoyl group is generated from an internal serine residue via an autocatalytic post-translational modification. Two non-identical subunits are generated from the proenzyme in this reaction, and the pyruvate is formed at the N-terminus of the alpha chain, which is derived from the carboxyl end of the proenzyme. The post-translation cleavage follows an unusual pathway, termed non-hydrolytic serinolysis, in which the side chain hydroxyl group of the serine supplies its oxygen atom to form the C-terminus of the beta chain, while the remainder of the serine residue undergoes an oxidative deamination to produce ammonia and the pyruvoyl group blocking the N-terminus of the alpha chain.

It carries out the reaction S-adenosyl-L-methionine + H(+) = S-adenosyl 3-(methylsulfanyl)propylamine + CO2. Its pathway is amine and polyamine biosynthesis; S-adenosylmethioninamine biosynthesis; S-adenosylmethioninamine from S-adenosyl-L-methionine: step 1/1. In Nicotiana sylvestris (Wood tobacco), this protein is S-adenosylmethionine decarboxylase proenzyme (SAMDC1).